A 444-amino-acid chain; its full sequence is Xylose isomerase (444 aa).

Catalysis depends on residues His101 and Asp104. Mg(2+) contacts are provided by Glu232, Glu268, His271, Asp296, Asp307, Asp309, and Asp339.

It belongs to the xylose isomerase family. As to quaternary structure, homotetramer. Requires Mg(2+) as cofactor.

It is found in the cytoplasm. The enzyme catalyses alpha-D-xylose = alpha-D-xylulofuranose. In Thermotoga petrophila (strain ATCC BAA-488 / DSM 13995 / JCM 10881 / RKU-1), this protein is Xylose isomerase.